Reading from the N-terminus, the 59-residue chain is Large ribosomal subunit protein bL32 (59 aa).

Belongs to the bacterial ribosomal protein bL32 family.

This Synechococcus sp. (strain RCC307) protein is Large ribosomal subunit protein bL32.